The chain runs to 97 residues: Cobalt transport protein CbiN (97 aa).

The next 2 membrane-spanning stretches (helical) occupy residues Val6–Leu26 and Ser68–Tyr88.

This sequence belongs to the CbiN family. As to quaternary structure, forms an energy-coupling factor (ECF) transporter complex composed of an ATP-binding protein (A component, CbiO), a transmembrane protein (T component, CbiQ) and 2 possible substrate-capture proteins (S components, CbiM and CbiN) of unknown stoichimetry.

The protein localises to the cell membrane. It participates in cofactor biosynthesis; adenosylcobalamin biosynthesis. Part of the energy-coupling factor (ECF) transporter complex CbiMNOQ involved in cobalt import. The sequence is that of Cobalt transport protein CbiN from Methanococcus maripaludis (strain C6 / ATCC BAA-1332).